The following is a 377-amino-acid chain: Chaperone protein DnaJ (377 aa).

Residues 3-67 (DYYDLLGVGR…QTRARYDQFG (65 aa)) form the J domain. Residues 133–215 (GQEQEIKIPH…CGGQGVRQVR (83 aa)) form a CR-type zinc finger. Positions 146, 149, 163, 166, 189, 192, 203, and 206 each coordinate Zn(2+). CXXCXGXG motif repeat units follow at residues 146–153 (CDTCGGSG), 163–170 (CGTCGGAG), 189–196 (CPNCGGTG), and 203–210 (CNACGGQG).

Belongs to the DnaJ family. As to quaternary structure, homodimer. Zn(2+) serves as cofactor.

The protein resides in the cytoplasm. Its function is as follows. Participates actively in the response to hyperosmotic and heat shock by preventing the aggregation of stress-denatured proteins and by disaggregating proteins, also in an autonomous, DnaK-independent fashion. Unfolded proteins bind initially to DnaJ; upon interaction with the DnaJ-bound protein, DnaK hydrolyzes its bound ATP, resulting in the formation of a stable complex. GrpE releases ADP from DnaK; ATP binding to DnaK triggers the release of the substrate protein, thus completing the reaction cycle. Several rounds of ATP-dependent interactions between DnaJ, DnaK and GrpE are required for fully efficient folding. Also involved, together with DnaK and GrpE, in the DNA replication of plasmids through activation of initiation proteins. In Parasynechococcus marenigrum (strain WH8102), this protein is Chaperone protein DnaJ.